A 316-amino-acid chain; its full sequence is MSNKLEQLRKLTTVVADTGEIDAIKKYQPEDATTNPSLILKAAQIAEYAPLIDASIEYAKTQSDDKAQQIQDTCDMLAVNIGKEILKTIPGRISTEVDARLSYDMEGSVAKARQLVKMYNDAGITNDRILIKLASTWEGIRAAEILEKEGINCNLTLLFSFAQARACAEAGVFLISPFVGRIMDWYKAKEGRDFEAQEDPGVLSVTKIYNYYKEYGYKTVVMGASFRNIGEILELAGCDRLTIAPALLAELEAAEGEVVEKLVDSKGAAERPAAMTHAEFLWEHNQDPMAVEKLAEGIRNFAVDQGKLEAMIAAKL.

Residue K132 is the Schiff-base intermediate with substrate of the active site.

The protein belongs to the transaldolase family. Type 1 subfamily. As to quaternary structure, homodimer.

Its subcellular location is the cytoplasm. It catalyses the reaction D-sedoheptulose 7-phosphate + D-glyceraldehyde 3-phosphate = D-erythrose 4-phosphate + beta-D-fructose 6-phosphate. The protein operates within carbohydrate degradation; pentose phosphate pathway; D-glyceraldehyde 3-phosphate and beta-D-fructose 6-phosphate from D-ribose 5-phosphate and D-xylulose 5-phosphate (non-oxidative stage): step 2/3. Transaldolase is important for the balance of metabolites in the pentose-phosphate pathway. This Vibrio vulnificus (strain CMCP6) protein is Transaldolase.